Consider the following 360-residue polypeptide: Nucleoporin SEH1-B (360 aa).

WD repeat units follow at residues 10 to 49 (DHKD…NWHC), 55 to 96 (THSG…SNDK), 111 to 152 (DSRT…NLSQ), 160 to 210 (SCKL…RKYA), 217 to 258 (SVSD…KELS), and 276 to 315 (NHNS…NWKC).

Belongs to the WD repeat SEC13 family. In terms of assembly, component of the Nup107-160 subcomplex of the nuclear pore complex (NPC). The Nup107-160 subcomplex includes NUP160, NUP133, NUP107, NUP98, NUP85, NUP43, NUP37, SEH1 and SEC13. Component of the GATOR2 subcomplex, composed of MIOS, SEC13, SEH1L, WDR24 and WDR59. The GATOR2 complex interacts with CASTOR1 and CASTOR2; the interaction is negatively regulated by arginine. The GATOR2 complex interacts with SESN1, SESN2 and SESN3; the interaction is negatively regulated by amino acids.

Its subcellular location is the chromosome. The protein localises to the centromere. The protein resides in the kinetochore. It is found in the nucleus. It localises to the nuclear pore complex. Its subcellular location is the lysosome membrane. Its activity is regulated as follows. The GATOR2 complex is negatively regulated by the upstream amino acid sensors CASTOR1 and SESN2, which sequester the GATOR2 complex in absence of amino acids. In the presence of abundant amino acids, GATOR2 is released from CASTOR1 and SESN2 and activated. Its function is as follows. Component of the Nup107-160 subcomplex of the nuclear pore complex (NPC). The Nup107-160 subcomplex is required for the assembly of a functional NPC. The Nup107-160 subcomplex is also required for normal kinetochore microtubule attachment, mitotic progression and chromosome segregation. This subunit plays a role in recruitment of the Nup107-160 subcomplex to the kinetochore. Functionally, as a component of the GATOR2 complex, functions as an activator of the amino acid-sensing branch of the mTORC1 signaling pathway. The GATOR2 complex indirectly activates mTORC1 through the inhibition of the GATOR1 subcomplex. GATOR2 probably acts as an E3 ubiquitin-protein ligase toward GATOR1. In the presence of abundant amino acids, the GATOR2 complex mediates ubiquitination of the NPRL2 core component of the GATOR1 complex, leading to GATOR1 inactivation. In the absence of amino acids, GATOR2 is inhibited, activating the GATOR1 complex. The sequence is that of Nucleoporin SEH1-B (seh1l-b) from Xenopus laevis (African clawed frog).